Consider the following 864-residue polypeptide: Seed linoleate 9S-lipoxygenase-2 (864 aa).

The PLAT domain maps to 46–171 (SGINIIGSTL…LYKSPRIFFA (126 aa)). The region spanning 174–864 (SYLPSETPSP…FRGIPNSISI (691 aa)) is the Lipoxygenase domain. The segment at 230–264 (PILGGSSTHPYPRRGRTGRYPTRKDPNSEKPATET) is disordered. The segment covering 251–264 (TRKDPNSEKPATET) has biased composition (basic and acidic residues). Positions 524, 529, 716, 720, and 864 each coordinate Fe cation.

It belongs to the lipoxygenase family. The cofactor is Fe cation.

It is found in the cytoplasm. It carries out the reaction (9Z,12Z)-octadecadienoate + O2 = (9S)-hydroperoxy-(10E,12Z)-octadecadienoate. Its pathway is lipid metabolism; oxylipin biosynthesis. Functionally, plant lipoxygenase may be involved in a number of diverse aspects of plant physiology including growth and development, pest resistance, and senescence or responses to wounding. It catalyzes the hydroperoxidation of lipids containing a cis,cis-1,4-pentadiene structure. This Pisum sativum (Garden pea) protein is Seed linoleate 9S-lipoxygenase-2 (LOX1.2).